We begin with the raw amino-acid sequence, 375 residues long: MTPILFVDRDGTLITEPADYQIDAYEKLRFVDHVIPAMLKLRDAGYQFVIVSNQDGLGSESFPRASFDGPNNLMLQIFASQGIEFREVLIDCSWPSDNAPTRKPGVGLMVPYLQDRTIDWARSAMVGDRITDIQFAQNLNIRGFQLRTDEFGGEWDWPGIAHELADAPRRAVVQRNTKETRIRVELDLDRVAEPKTATGLPFFDHMLEQIGKHGGFALDIRAEGDLHIDEHHTIEDTGLALGQALREALGDKRGIGRYGFDPESSPWQVAGDTAQHGFTLPMDETIASAALDFSGRPYFVFDGQFKRDRLGDMPTELVPHFFRSICDASGVNLHLTVRGENDHHKVEACFKALARALRQAIRREGSALPTTKGAL.

A histidinol-phosphatase region spans residues 1 to 168 (MTPILFVDRD…GIAHELADAP (168 aa)). The Nucleophile role is filled by Asp8. 3 residues coordinate Mg(2+): Asp8, Asp10, and Asp128. Residue Asp10 is the Proton donor of the active site. The interval 169–375 (RRAVVQRNTK…SALPTTKGAL (207 aa)) is imidazoleglycerol-phosphate dehydratase.

It in the N-terminal section; belongs to the histidinol-phosphatase family. This sequence in the C-terminal section; belongs to the imidazoleglycerol-phosphate dehydratase family. The cofactor is Mg(2+).

The protein localises to the cytoplasm. The catalysed reaction is D-erythro-1-(imidazol-4-yl)glycerol 3-phosphate = 3-(imidazol-4-yl)-2-oxopropyl phosphate + H2O. The enzyme catalyses L-histidinol phosphate + H2O = L-histidinol + phosphate. The protein operates within amino-acid biosynthesis; L-histidine biosynthesis; L-histidine from 5-phospho-alpha-D-ribose 1-diphosphate: step 6/9. Its pathway is amino-acid biosynthesis; L-histidine biosynthesis; L-histidine from 5-phospho-alpha-D-ribose 1-diphosphate: step 8/9. The chain is Histidine biosynthesis bifunctional protein HisB from Xanthomonas oryzae pv. oryzae (strain MAFF 311018).